A 132-amino-acid chain; its full sequence is Small ribosomal subunit protein uS8 (132 aa).

The protein belongs to the universal ribosomal protein uS8 family. As to quaternary structure, part of the 30S ribosomal subunit. Contacts proteins S5 and S12.

Its function is as follows. One of the primary rRNA binding proteins, it binds directly to 16S rRNA central domain where it helps coordinate assembly of the platform of the 30S subunit. This is Small ribosomal subunit protein uS8 from Coprothermobacter proteolyticus (strain ATCC 35245 / DSM 5265 / OCM 4 / BT).